Consider the following 2498-residue polypeptide: PKS-NRPS hybrid synthetase acdB (2498 aa).

The adenylation (A) domain stretch occupies residues 34 to 427 (FEQAAHAHFD…GRADSQVKIR (394 aa)). One can recognise a Carrier 1 domain in the interval 531-606 (QPATELERDI…SLAGYLMDMD (76 aa)). The residue at position 566 (Ser-566) is an O-(pantetheine 4'-phosphoryl)serine. In terms of domain architecture, Ketosynthase family 3 (KS3) spans 627 to 1058 (SDDIAVVSMA…GTNAHVIVEE (432 aa)). Catalysis depends on for beta-ketoacyl synthase activity residues Cys-802, His-938, and His-979. The tract at residues 1165 to 1485 (LFAGQGSQQL…EILARLHVQH (321 aa)) is malonyl-CoA:ACP transacylase (MAT) domain. The tract at residues 1739-1917 (GAVLITGGLS…PAVCVAYGPL (179 aa)) is ketoreductase (KR) domain. Residues 2017 to 2092 (EILLRTIQEA…ELSRYLLPQL (76 aa)) form the Carrier 2 domain. Ser-2052 is modified (O-(pantetheine 4'-phosphoryl)serine). The interval 2149–2378 (VTGATEFVGA…FPVDYVCRTI (230 aa)) is thioester reductase (TE) domain.

It in the C-terminal section; belongs to the NRP synthetase family. It depends on pantetheine 4'-phosphate as a cofactor.

It participates in secondary metabolite biosynthesis. Its function is as follows. PKS-NRPS hybrid synthetase; part of the gene cluster that mediates the biosynthesis of aspcandine, a pyrrolobenzazepine alkaloid. Initially, the indoleamine 2,3-dioxygenase acdA accepts L-tryptophan and performs the oxidative opening of the indole ring to yield N'-formyl-L-kynurenine, which undergoes the spontaneous deformylation reaction to provide L-kynurenine. The kynurenine 3-monooxygenase acdD then hydroxylates L-kynurenine to afford 3-hydroxy-L-kynurenine. 3-hydroxy-L-kynurenine is activated by the A domain of the NRPS-PKS acdB and subsequently loaded onto the enzyme. The KS domain conducts the decarboxylative condensation of the 3-hydroxy-L-kynurenyl and malonyl moieties, and subsequent nucleophilic attacks by the two amino groups would occur nonenzymatically at two distinct positions, achieving the chain release and the construction of the tricyclic system. Finally, a dehydration reaction completes the biosynthesis to yield aspcandine. This Aspergillus candidus protein is PKS-NRPS hybrid synthetase acdB.